The chain runs to 74 residues: Mu-conotoxin-like T3.1 (74 aa).

Positions 1–19 are cleaved as a signal peptide; that stretch reads MSKLGVLLTICLLLFPLTA. Residues 20–74 constitute a propeptide that is removed on maturation; sequence LPMDGDEPADRPAERMQDNISSEQHPLFEERHGCCKGPEGCSSRECRPQHCCGRR. Intrachain disulfides connect Cys-53-Cys-65, Cys-54-Cys-70, and Cys-60-Cys-71. Pro-57 is modified (4-hydroxyproline). Residues Glu-58 and Glu-64 each carry the 4-carboxyglutamate modification. Pro-67 is subject to 4-hydroxyproline. Cys-71 bears the Cysteine amide mark.

Belongs to the conotoxin M superfamily. As to expression, expressed by the venom duct.

It localises to the secreted. Its function is as follows. Mu-conotoxins block voltage-gated sodium channels (Nav). In vitro, this synthetic peptide displays a low blocking effect in mouse extensor digitorum longus muscles (IC(50)=616 nM). This chain is Mu-conotoxin-like T3.1, found in Conus tulipa (Fish-hunting cone snail).